A 264-amino-acid chain; its full sequence is MNLLDIIIIGIVQGISEWLPISSKTQVLISSHYLLNLPIAIAYSFGLFMEMGSIGSATIYFRKDIMSVFRDRKLLLYLAIITIITGLVGVPLYIISDKLLKNAYDPSIPMIILGIALIVDGLYIRYSRIKIRSFKDLSLKNIILIGIAQGLAALPGVSRSGMTVSTMLFLGIKPDDAFRYSYLAYIPAAVGAVGTTILFSKTNISYVISLIGIGGVLISVISAFIIGMLTIDLLLRFAKRRNIYIIDFTLGGIAIVVSVLTILI.

7 consecutive transmembrane segments (helical) span residues 34–54 (LLNL…MGSI), 75–95 (LLYL…LYII), 104–124 (YDPS…GLYI), 137–157 (LSLK…LPGV), 180–200 (YSYL…ILFS), 207–227 (VISL…FIIG), and 243–263 (IYII…LTIL).

Belongs to the UppP family.

It is found in the cell membrane. It carries out the reaction di-trans,octa-cis-undecaprenyl diphosphate + H2O = di-trans,octa-cis-undecaprenyl phosphate + phosphate + H(+). In terms of biological role, catalyzes the dephosphorylation of undecaprenyl diphosphate (UPP). This Sulfurisphaera tokodaii (strain DSM 16993 / JCM 10545 / NBRC 100140 / 7) (Sulfolobus tokodaii) protein is Undecaprenyl-diphosphatase.